The following is a 615-amino-acid chain: uncharacterized protein (615 aa).

This sequence belongs to the mycobacterial PPE family.

This is an uncharacterized protein from Mycobacterium tuberculosis (strain CDC 1551 / Oshkosh).